The chain runs to 340 residues: N-acetyl-gamma-glutamyl-phosphate reductase (340 aa).

Residue cysteine 146 is part of the active site.

The protein belongs to the NAGSA dehydrogenase family. Type 1 subfamily.

It is found in the cytoplasm. It carries out the reaction N-acetyl-L-glutamate 5-semialdehyde + phosphate + NADP(+) = N-acetyl-L-glutamyl 5-phosphate + NADPH + H(+). The protein operates within amino-acid biosynthesis; L-arginine biosynthesis; N(2)-acetyl-L-ornithine from L-glutamate: step 3/4. Its function is as follows. Catalyzes the NADPH-dependent reduction of N-acetyl-5-glutamyl phosphate to yield N-acetyl-L-glutamate 5-semialdehyde. The chain is N-acetyl-gamma-glutamyl-phosphate reductase from Streptococcus gordonii (strain Challis / ATCC 35105 / BCRC 15272 / CH1 / DL1 / V288).